The chain runs to 154 residues: Endoribonuclease YbeY (154 aa).

His-113, His-117, and His-123 together coordinate Zn(2+).

Belongs to the endoribonuclease YbeY family. It depends on Zn(2+) as a cofactor.

The protein resides in the cytoplasm. Its function is as follows. Single strand-specific metallo-endoribonuclease involved in late-stage 70S ribosome quality control and in maturation of the 3' terminus of the 16S rRNA. In Ehrlichia chaffeensis (strain ATCC CRL-10679 / Arkansas), this protein is Endoribonuclease YbeY.